A 406-amino-acid chain; its full sequence is Tryptophan synthase beta chain (406 aa).

Lysine 99 bears the N6-(pyridoxal phosphate)lysine mark.

Belongs to the TrpB family. Tetramer of two alpha and two beta chains. The cofactor is pyridoxal 5'-phosphate.

It carries out the reaction (1S,2R)-1-C-(indol-3-yl)glycerol 3-phosphate + L-serine = D-glyceraldehyde 3-phosphate + L-tryptophan + H2O. The protein operates within amino-acid biosynthesis; L-tryptophan biosynthesis; L-tryptophan from chorismate: step 5/5. Its function is as follows. The beta subunit is responsible for the synthesis of L-tryptophan from indole and L-serine. In Rhizobium leguminosarum bv. trifolii (strain WSM2304), this protein is Tryptophan synthase beta chain.